The primary structure comprises 778 residues: Endonuclease MutS2 (778 aa).

An ATP-binding site is contributed by 328–335 (GPNTGGKT). In terms of domain architecture, Smr spans 702-777 (LDLRGKRYEE…GSGATIVTFK (76 aa)).

Belongs to the DNA mismatch repair MutS family. MutS2 subfamily. Homodimer. Binds to stalled ribosomes, contacting rRNA.

In terms of biological role, endonuclease that is involved in the suppression of homologous recombination and thus may have a key role in the control of bacterial genetic diversity. Its function is as follows. Acts as a ribosome collision sensor, splitting the ribosome into its 2 subunits. Detects stalled/collided 70S ribosomes which it binds and splits by an ATP-hydrolysis driven conformational change. Acts upstream of the ribosome quality control system (RQC), a ribosome-associated complex that mediates the extraction of incompletely synthesized nascent chains from stalled ribosomes and their subsequent degradation. Probably generates substrates for RQC. The protein is Endonuclease MutS2 of Streptococcus pneumoniae (strain Taiwan19F-14).